The chain runs to 319 residues: Ribonucleoside-diphosphate reductase small chain (319 aa).

Positions 70, 101, and 104 each coordinate Fe cation. Residue Tyr108 is part of the active site. Glu163, Glu197, and His200 together coordinate Fe cation. The interval Phe313–Phe319 is interaction with R1.

This sequence belongs to the ribonucleoside diphosphate reductase small chain family. In terms of assembly, interacts with RNR1/OPG080 subunit. Can interact with host RNR1 supunit. The cofactor is Fe cation.

It carries out the reaction a 2'-deoxyribonucleoside 5'-diphosphate + [thioredoxin]-disulfide + H2O = a ribonucleoside 5'-diphosphate + [thioredoxin]-dithiol. In terms of biological role, ribonucleoside-diphosphate reductase holoenzyme provides the precursors necessary for viral DNA synthesis. Allows virus growth in non-dividing cells. Catalyzes the biosynthesis of deoxyribonucleotides from the corresponding ribonucleotides. This Variola virus protein is Ribonucleoside-diphosphate reductase small chain (OPG048).